A 325-amino-acid polypeptide reads, in one-letter code: Large ribosomal subunit protein uL18 (325 aa).

The segment at isoleucine 247–arginine 300 is disordered. Composition is skewed to low complexity over residues arginine 262–proline 273 and threonine 282–arginine 291.

Belongs to the universal ribosomal protein uL18 family. As to quaternary structure, component of the large ribosomal subunit (LSU).

The protein localises to the cytoplasm. It localises to the nucleus. In terms of biological role, component of the ribosome, a large ribonucleoprotein complex responsible for the synthesis of proteins in the cell. The small ribosomal subunit (SSU) binds messenger RNAs (mRNAs) and translates the encoded message by selecting cognate aminoacyl-transfer RNA (tRNA) molecules. The large subunit (LSU) contains the ribosomal catalytic site termed the peptidyl transferase center (PTC), which catalyzes the formation of peptide bonds, thereby polymerizing the amino acids delivered by tRNAs into a polypeptide chain. The nascent polypeptides leave the ribosome through a tunnel in the LSU and interact with protein factors that function in enzymatic processing, targeting, and the membrane insertion of nascent chains at the exit of the ribosomal tunnel. The sequence is that of Large ribosomal subunit protein uL18 (RpL5) from Anopheles gambiae (African malaria mosquito).